Consider the following 322-residue polypeptide: Ferrochelatase (322 aa).

Fe cation-binding residues include His-195 and Glu-276.

The protein belongs to the ferrochelatase family.

It is found in the cytoplasm. The catalysed reaction is heme b + 2 H(+) = protoporphyrin IX + Fe(2+). It participates in porphyrin-containing compound metabolism; protoheme biosynthesis; protoheme from protoporphyrin-IX: step 1/1. Its function is as follows. Catalyzes the ferrous insertion into protoporphyrin IX. In Edwardsiella ictaluri (strain 93-146), this protein is Ferrochelatase.